Here is a 298-residue protein sequence, read N- to C-terminus: GTP cyclohydrolase FolE2 (298 aa).

Belongs to the GTP cyclohydrolase IV family.

It catalyses the reaction GTP + H2O = 7,8-dihydroneopterin 3'-triphosphate + formate + H(+). It functions in the pathway cofactor biosynthesis; 7,8-dihydroneopterin triphosphate biosynthesis; 7,8-dihydroneopterin triphosphate from GTP: step 1/1. Converts GTP to 7,8-dihydroneopterin triphosphate. The sequence is that of GTP cyclohydrolase FolE2 from Pseudomonas fluorescens (strain Pf0-1).